Reading from the N-terminus, the 1005-residue chain is uncharacterized protein (1005 aa).

The signal sequence occupies residues 1 to 24 (MKFQRKYWGLLSTLGVSSAVALSA). Cys-25 carries the N-palmitoyl cysteine lipid modification. Residue Cys-25 is the site of S-diacylglycerol cysteine attachment. Disordered stretches follow at residues 105-165 (KKDK…EEKF) and 786-825 (TQKI…WDDV). Low complexity-rich tracts occupy residues 110-131 (TSSQ…TSTS) and 145-156 (QSSSNGQNNQQS). Over residues 786–801 (TQKIDQQNTASTTSDV) the composition is skewed to polar residues.

The protein resides in the cell membrane. This is an uncharacterized protein from Mycoplasma pneumoniae (strain ATCC 29342 / M129 / Subtype 1) (Mycoplasmoides pneumoniae).